The primary structure comprises 272 residues: Pyridoxal phosphate phosphatase YbhA (272 aa).

Catalysis depends on Asp9, which acts as the Nucleophile. Asp9 is a Mg(2+) binding site. Leu10 lines the phosphate pocket. Mg(2+) is bound at residue Asp11. Residues 43 to 44 (TG) and Lys200 contribute to the phosphate site. Residue Asp223 coordinates Mg(2+). Position 226 (Asn226) interacts with phosphate.

Belongs to the HAD-like hydrolase superfamily. CbbY/CbbZ/Gph/YieH family. The cofactor is Mg(2+). Mn(2+) serves as cofactor. It depends on Co(2+) as a cofactor. Requires Zn(2+) as cofactor.

It carries out the reaction pyridoxal 5'-phosphate + H2O = pyridoxal + phosphate. Catalyzes the dephosphorylation of pyridoxal-phosphate (PLP). Can also hydrolyze erythrose-4-phosphate (Ery4P) and fructose-1,6-bis-phosphate (Fru1,6bisP). The chain is Pyridoxal phosphate phosphatase YbhA (ybhA) from Escherichia coli (strain K12).